A 98-amino-acid chain; its full sequence is NADH-ubiquinone oxidoreductase chain 4L (98 aa).

3 consecutive transmembrane segments (helical) span residues 2-22 (MMAV…TLMF), 26-46 (LMST…ITTI), and 59-79 (IPIV…ALLV).

It belongs to the complex I subunit 4L family. Core subunit of respiratory chain NADH dehydrogenase (Complex I) which is composed of 45 different subunits.

Its subcellular location is the mitochondrion inner membrane. The catalysed reaction is a ubiquinone + NADH + 5 H(+)(in) = a ubiquinol + NAD(+) + 4 H(+)(out). Core subunit of the mitochondrial membrane respiratory chain NADH dehydrogenase (Complex I) which catalyzes electron transfer from NADH through the respiratory chain, using ubiquinone as an electron acceptor. Part of the enzyme membrane arm which is embedded in the lipid bilayer and involved in proton translocation. In Phodopus sungorus (Striped hairy-footed hamster), this protein is NADH-ubiquinone oxidoreductase chain 4L (MT-ND4L).